Reading from the N-terminus, the 101-residue chain is Ascorbate-specific PTS system EIIB component (101 aa).

Residues 3-96 (VRILAVCGNG…KLLEVIKAHF (94 aa)) form the PTS EIIB type-2 domain. The active-site Phosphocysteine intermediate is the cysteine 9. Cysteine 9 carries the post-translational modification Phosphocysteine.

It is found in the cytoplasm. The catalysed reaction is N(pros)-phospho-L-histidyl-[protein] + L-ascorbate(out) = L-ascorbate 6-phosphate(in) + L-histidyl-[protein]. Functionally, the phosphoenolpyruvate-dependent sugar phosphotransferase system (sugar PTS), a major carbohydrate active transport system, catalyzes the phosphorylation of incoming sugar substrates concomitantly with their translocation across the cell membrane. The enzyme II UlaABC PTS system is involved in ascorbate transport. The polypeptide is Ascorbate-specific PTS system EIIB component (ulaB) (Shigella sonnei (strain Ss046)).